The sequence spans 20 residues: Putative serine protease (20 aa).

This sequence belongs to the peptidase S1 family.

It is found in the secreted. Binds the A.niger cell wall component alpha-1,3-glucan, a fungal pathogen-associated molecular pattern (PAMP) that activates the host immune response. The protein is Putative serine protease of Galleria mellonella (Greater wax moth).